A 147-amino-acid chain; its full sequence is MVYFTAEEKAAITSLWGKVNVEEAGGKALGRLLIVYPWTQRFFDKFGNLSSASAIMGNPKIKAHGKKVLNSFGDAVENPDNLKGTFAKLSELHCDKLLVDPEDFRLLGNVIVIVLANHFGKEFTPQVQAAWQKMVTGVASALARKYH.

The region spanning 3-147 (YFTAEEKAAI…VASALARKYH (145 aa)) is the Globin domain. Residues His64 and His93 each contribute to the heme b site.

The protein belongs to the globin family. In terms of assembly, heterotetramer of two alpha chains and two gamma chains in fetal hemoglobin (Hb F). In terms of tissue distribution, red blood cells.

In terms of biological role, gamma chains make up the fetal hemoglobin F, in combination with alpha chains. The polypeptide is Hemoglobin subunit gamma (HBG) (Dugong dugon (Dugong)).